The sequence spans 94 residues: Acylphosphatase (94 aa).

Residues 8 to 94 (HIRAWVSGKV…ETPPLGFEVC (87 aa)) enclose the Acylphosphatase-like domain. Active-site residues include Arg23 and Asn41.

The protein belongs to the acylphosphatase family.

The enzyme catalyses an acyl phosphate + H2O = a carboxylate + phosphate + H(+). The chain is Acylphosphatase (acyP) from Hahella chejuensis (strain KCTC 2396).